A 771-amino-acid chain; its full sequence is U-box domain-containing protein 6 (771 aa).

A U-box domain is found at 274–348 (IPPEELRCPI…ASWCEQNGIT (75 aa)). Positions 394–415 (EESSTIESERQQKEKNNAPDEV) are disordered. Residues 400–411 (ESERQQKEKNNA) show a composition bias toward basic and acidic residues. 5 ARM repeats span residues 456-499 (EEAR…NLAV), 502-542 (NRNK…CLEK), 544-581 (KPVI…NLST), 583-622 (SPNI…NLAS), and 625-664 (EGKE…ILCT). Basic and acidic residues predominate over residues 706–722 (EQRHRDQPSPNKEEAPR). A disordered region spans residues 706 to 751 (EQRHRDQPSPNKEEAPRKTVSAPMAIPAPVSAPESEVKPLTKSISR).

The enzyme catalyses S-ubiquitinyl-[E2 ubiquitin-conjugating enzyme]-L-cysteine + [acceptor protein]-L-lysine = [E2 ubiquitin-conjugating enzyme]-L-cysteine + N(6)-ubiquitinyl-[acceptor protein]-L-lysine.. Its pathway is protein modification; protein ubiquitination. In terms of biological role, functions as an E3 ubiquitin ligase. This is U-box domain-containing protein 6 (PUB6) from Arabidopsis thaliana (Mouse-ear cress).